The sequence spans 361 residues: Holliday junction branch migration complex subunit RuvB (361 aa).

The disordered stretch occupies residues 1 to 21; that stretch reads MHKDEDQRLLGAVPLPNDPDR. Positions 1–184 are large ATPase domain (RuvB-L); the sequence is MHKDEDQRLL…FGIPIRLNFY (184 aa). ATP contacts are provided by residues Leu23, Arg24, Gly65, Lys68, Thr69, Thr70, 131 to 133, Arg174, Tyr184, and Arg221; that span reads EDY. Position 69 (Thr69) interacts with Mg(2+). The segment at 185 to 255 is small ATPAse domain (RuvB-S); it reads TIEELEYIVQ…IADEALSRLE (71 aa). A head domain (RuvB-H) region spans residues 258–361; the sequence is HLGLDPLDRR…QTVLWDEADD (104 aa). Positions 294, 313, and 318 each coordinate DNA.

Belongs to the RuvB family. In terms of assembly, homohexamer. Forms an RuvA(8)-RuvB(12)-Holliday junction (HJ) complex. HJ DNA is sandwiched between 2 RuvA tetramers; dsDNA enters through RuvA and exits via RuvB. An RuvB hexamer assembles on each DNA strand where it exits the tetramer. Each RuvB hexamer is contacted by two RuvA subunits (via domain III) on 2 adjacent RuvB subunits; this complex drives branch migration. In the full resolvosome a probable DNA-RuvA(4)-RuvB(12)-RuvC(2) complex forms which resolves the HJ.

Its subcellular location is the cytoplasm. The catalysed reaction is ATP + H2O = ADP + phosphate + H(+). In terms of biological role, the RuvA-RuvB-RuvC complex processes Holliday junction (HJ) DNA during genetic recombination and DNA repair, while the RuvA-RuvB complex plays an important role in the rescue of blocked DNA replication forks via replication fork reversal (RFR). RuvA specifically binds to HJ cruciform DNA, conferring on it an open structure. The RuvB hexamer acts as an ATP-dependent pump, pulling dsDNA into and through the RuvAB complex. RuvB forms 2 homohexamers on either side of HJ DNA bound by 1 or 2 RuvA tetramers; 4 subunits per hexamer contact DNA at a time. Coordinated motions by a converter formed by DNA-disengaged RuvB subunits stimulates ATP hydrolysis and nucleotide exchange. Immobilization of the converter enables RuvB to convert the ATP-contained energy into a lever motion, pulling 2 nucleotides of DNA out of the RuvA tetramer per ATP hydrolyzed, thus driving DNA branch migration. The RuvB motors rotate together with the DNA substrate, which together with the progressing nucleotide cycle form the mechanistic basis for DNA recombination by continuous HJ branch migration. Branch migration allows RuvC to scan DNA until it finds its consensus sequence, where it cleaves and resolves cruciform DNA. This is Holliday junction branch migration complex subunit RuvB from Bartonella henselae (strain ATCC 49882 / DSM 28221 / CCUG 30454 / Houston 1) (Rochalimaea henselae).